Here is a 398-residue protein sequence, read N- to C-terminus: Acetate kinase (398 aa).

Asn7 contributes to the Mg(2+) binding site. Lys14 is a binding site for ATP. Arg85 serves as a coordination point for substrate. Asp142 acts as the Proton donor/acceptor in catalysis. ATP-binding positions include 202 to 206 (HLGNG), 277 to 279 (DMR), and 325 to 329 (GIGEN). Residue Glu379 participates in Mg(2+) binding.

The protein belongs to the acetokinase family. In terms of assembly, homodimer. It depends on Mg(2+) as a cofactor. Mn(2+) serves as cofactor.

It is found in the cytoplasm. The catalysed reaction is acetate + ATP = acetyl phosphate + ADP. The protein operates within metabolic intermediate biosynthesis; acetyl-CoA biosynthesis; acetyl-CoA from acetate: step 1/2. Catalyzes the formation of acetyl phosphate from acetate and ATP. Can also catalyze the reverse reaction. This is Acetate kinase from Deinococcus radiodurans (strain ATCC 13939 / DSM 20539 / JCM 16871 / CCUG 27074 / LMG 4051 / NBRC 15346 / NCIMB 9279 / VKM B-1422 / R1).